The chain runs to 195 residues: Shikimate kinase (195 aa).

Residue 33–38 (GAGKTT) coordinates ATP. Residue T37 participates in Mg(2+) binding. The substrate site is built by D55, R79, and G101. R139 provides a ligand contact to ATP. R158 contributes to the substrate binding site. R175 contributes to the ATP binding site.

The protein belongs to the shikimate kinase family. As to quaternary structure, monomer. Mg(2+) serves as cofactor.

It is found in the cytoplasm. It catalyses the reaction shikimate + ATP = 3-phosphoshikimate + ADP + H(+). The protein operates within metabolic intermediate biosynthesis; chorismate biosynthesis; chorismate from D-erythrose 4-phosphate and phosphoenolpyruvate: step 5/7. In terms of biological role, catalyzes the specific phosphorylation of the 3-hydroxyl group of shikimic acid using ATP as a cosubstrate. The polypeptide is Shikimate kinase (Nitrosospira multiformis (strain ATCC 25196 / NCIMB 11849 / C 71)).